The primary structure comprises 396 residues: L-lactate dehydrogenase (396 aa).

One can recognise an FMN hydroxy acid dehydrogenase domain in the interval 1-380; sequence MIISAASDYR…SRDSLVQELG (380 aa). Residue Y24 coordinates substrate. 2 residues coordinate FMN: S106 and Q127. Y129 is a binding site for substrate. Position 155 (T155) interacts with FMN. R164 provides a ligand contact to substrate. An FMN-binding site is contributed by K251. Residue H275 is the Proton acceptor of the active site. Residue R278 participates in substrate binding. 306 to 330 contacts FMN; it reads DSGIRNGLDVVRMIALGADSVLLGR.

Belongs to the FMN-dependent alpha-hydroxy acid dehydrogenase family. FMN is required as a cofactor.

Its subcellular location is the cell inner membrane. The catalysed reaction is (S)-lactate + A = pyruvate + AH2. Functionally, catalyzes the conversion of L-lactate to pyruvate. Is coupled to the respiratory chain. The chain is L-lactate dehydrogenase from Citrobacter koseri (strain ATCC BAA-895 / CDC 4225-83 / SGSC4696).